Reading from the N-terminus, the 379-residue chain is MSSVPARRGDAHIDFARSPRPTIGVEWEFALVDAQTRDLSNEATAVIAEIGENPRVHKELLRNTVEVVSGICRTVPEAMEDLRQTLGPARRIVRDRGMELFCAGAHPFAQWTTQKLTDAPRYAELIKRTQWWGRQMLIWGVHVHVGISSPNKVMPIMTSLLNYYPHLLALSASSPWWTGVDTGYASNRAMMFQQLPTAGLPFQFQTWAEFEGFVYDQKKTGIIDHVDEVRWDIRPSPHLGTLEMRICDGVSNLHELAALVALTHCLVVDLDRRLEADESLPTMPPWHHQENKWRAARYGLDAVIILDADSNERLVTEDLDDVLNRLEPVARKLQCADELAAVADIPRHGASYQRQRRVAEEHDGDLRAVVDALVAELEI.

It belongs to the glutamate--cysteine ligase type 2 family. YbdK subfamily.

It carries out the reaction L-cysteine + L-glutamate + ATP = gamma-L-glutamyl-L-cysteine + ADP + phosphate + H(+). ATP-dependent carboxylate-amine ligase which exhibits weak glutamate--cysteine ligase activity. This chain is Putative glutamate--cysteine ligase 2, found in Mycobacterium avium (strain 104).